A 985-amino-acid polypeptide reads, in one-letter code: Thioredoxin domain-containing protein 11 (985 aa).

Residues 1–11 (MSECGGRGGGS) are compositionally biased toward gly residues. The disordered stretch occupies residues 1-38 (MSECGGRGGGSSSSEDAEDEGGGGGGPAGSDCLSSSPT). Residues 29-38 (GSDCLSSSPT) are compositionally biased toward low complexity. A helical transmembrane segment spans residues 65–85 (LLCGAVALGCALLLALKFTCS). The region spanning 92 to 214 (IPAKPPVSFF…IEKFVRRVMK (123 aa)) is the Thioredoxin 1 domain. 2 disulfide bridges follow: C469–C472 and C719–C722. One can recognise a Thioredoxin 2 domain in the interval 649-799 (LDPKQALMKL…LLRFILHHSD (151 aa)). Residues 821–919 (VLQRGHISHL…ASENLLTENT (99 aa)) are a coiled coil. At S828 the chain carries Phosphoserine. The interval 935–985 (RDGAESLAAQREVHPKQPEPSATPQLPGSSPPPANVSATLVSERNKENRTD) is disordered.

It belongs to the protein disulfide isomerase family. Interacts with the cytoplasmic part of DUOX1 and DUOX2. Interacts with TPO and CYBA. As to expression, widely expressed at low level. Expressed at higher level in thyroid and prostate.

Its subcellular location is the endoplasmic reticulum membrane. Its function is as follows. May act as a redox regulator involved in DUOX proteins folding. The interaction with DUOX1 and DUOX2 suggest that it belongs to a multiprotein complex constituting the thyroid H(2)O(2) generating system. It is however not sufficient to assist DUOX1 and DUOX2 in H(2)O(2) generation. The polypeptide is Thioredoxin domain-containing protein 11 (TXNDC11) (Homo sapiens (Human)).